The primary structure comprises 477 residues: Homeobox protein Meis2 (477 aa).

Residues Asp-71–Glu-191 form a required for interaction with PBX1 region. Positions Gly-110 to Asp-193 constitute an MEIS N-terminal domain. The span at Asp-193–Leu-203 shows a compositional bias: basic and acidic residues. The disordered stretch occupies residues Asp-193–Phe-283. Composition is skewed to polar residues over residues Ser-204–Ser-217 and Gly-239–Gln-251. The segment at residues Arg-276–Met-338 is a DNA-binding region (homeobox; TALE-type). Positions Leu-299–Arg-333 are interaction with DNA. The segment at Asp-340 to Gln-477 is transcriptional activation domain.

It belongs to the TALE/MEIS homeobox family. Monomer and homodimer. Heterodimer with HOXB13. Isoform 2 interacts with TLX1. Isoform 3 interacts with HOXA13 and PBX1 isoform PBX1b. Isoform 4 interacts with SP1, SP3 and KLF4. Isoform 4 and isoform 5 interact with PBX1 isoform PBX1a; the interaction partially relieves MEIS2 autoinhibition. Isoform 3 also known as MEIS2b is part of a PDX1:PBX1b:Meis2B complex; Meis2B is recruited by PBX1b and can be replaced by isoform 4 in a small fraction of complexes. Can form trimeric complexes including HOXB8 and PBX2 or PBX3. Expressed in various tissues. Expressed at high level in the lymphoid organs of hematopoietic tissues. Also expressed in some regions of the brain, such as the putamen.

Its subcellular location is the nucleus. It localises to the cytoplasm. The protein resides in the perinuclear region. Its function is as follows. Involved in transcriptional regulation. Binds to HOX or PBX proteins to form dimers, or to a DNA-bound dimer of PBX and HOX proteins and thought to have a role in stabilization of the homeoprotein-DNA complex. Isoform 3 is required for the activity of a PDX1:PBX1b:MEIS2b complex in pancreatic acinar cells involved in the transcriptional activation of the ELA1 enhancer; the complex binds to the enhancer B element and cooperates with the transcription factor 1 complex (PTF1) bound to the enhancer A element; MEIS2 is not involved in complex DNA-binding. Probably in complex with PBX1, is involved in transcriptional regulation by KLF4. Isoform 3 and isoform 4 can bind to a EPHA8 promoter sequence containing the DNA motif 5'-CGGTCA-3'; in cooperation with a PBX protein (such as PBX2) is proposed to be involved in the transcriptional activation of EPHA8 in the developing midbrain. May be involved in regulation of myeloid differentiation. Can bind to the DNA sequence 5'-TGACAG-3'in the activator ACT sequence of the D(1A) dopamine receptor (DRD1) promoter and activate DRD1 transcription; isoform 5 cannot activate DRD1 transcription. In Homo sapiens (Human), this protein is Homeobox protein Meis2 (MEIS2).